The following is a 93-amino-acid chain: MLQLNLQFFASKKGVGSTKNGRDSISKRLGAKRADGQTVSAGSILYRQRGTKIHPGENVGRGGDDTLFAKVDGVVRYERLGRDKKQVSVYPVA.

Positions 1 to 9 are excised as a propeptide; it reads MLQLNLQFF. The interval 14–33 is disordered; that stretch reads GVGSTKNGRDSISKRLGAKR.

It belongs to the bacterial ribosomal protein bL27 family. The N-terminus is cleaved by ribosomal processing cysteine protease Prp.

The polypeptide is Large ribosomal subunit protein bL27 (Exiguobacterium sp. (strain ATCC BAA-1283 / AT1b)).